We begin with the raw amino-acid sequence, 943 residues long: MLKLLFGDPNTRKLKRYQPIVEEINFLEEEISQLTDDDLRKETQNLKSKISSELDFKKQKELLEEFLPKAFAIVREASKRVLDMRHFDVQLIGGMVLHECQIAEMKTGEGKTLVATLPCYLNALTGKGVHVVTVNDYLARRDAEWMGQVHRFLGLSVGLIQQDMNPVERKKNYDCDITYATNSELGFDYLRDNMATDVNEVVQRKFNYCVIDEVDSILIDEARTPLIISGQVERPQEKYQKAAQLSLKLVKAKELSKDGIDPEGDYEVDEKQRSCILTDQGFAKCEEYLGVNDLYNPKDPWAHYITNALKAKELFIKDVNYIIKNNEAVIVDEFTGRVMPGRRWSDGQHQAIEAKESLQIQPETQTLASITYQNFFLLYPGLAGMTGTAKTEEVEFEKTYKLESTVIPTNQLRKRKDWSDQVFKTEIGKWKAVAKETANIHRDGRPVLVGTTSVEKSELLSSLLSEEKIPHNLLNAKPENVEREAEIVAQAGRAGAVTIATNMAGRGTDIILGGNSDYMARLKLKEILIPLLVKPDNEHKPPIPKQRNSKSKGGFSKKASSKLKKNISNSSTSLFPCKLDEAIEKQLSLLSDELVKNWGDRQLSVLELDDRIATAAEKAPTDDDLIKLLRESLSAVKKEYEKVLTHEEEKVRKAGGLHVIGTERHESRRVDNQLRGRAGRQGDLGSTRFFLSLEDNLLRIFGGDRVANLMNAFRVDEDMPIESGMLTRSLESAQKKVETYYYDIRKQVFEYDEVMNNQRKAVYGERLRVLKGNDLKRQVIGYGERTMSEIVDAYINPDLPPEEWNIDQLISKVKEFIYLLDDLKSEDINLLSIEELKNYLQEQLRIAYDLKESQIEKIRPGLMREAERFFILQQIDNLWREHLQSMDSLRESVGLRGYGQKDPLIEYKNEGYDMFLEMMTNMRRNVIYSMFMFQPKTEVNEKK.

Residues Gln-90, 108–112 (GEGKT), and Asp-509 each bind ATP. A disordered region spans residues 535–564 (PDNEHKPPIPKQRNSKSKGGFSKKASSKLK).

The protein belongs to the SecA family. As to quaternary structure, monomer and homodimer. Part of the essential Sec protein translocation apparatus which comprises SecA, SecYEG and auxiliary proteins SecDF. Other proteins may also be involved.

Its subcellular location is the cell inner membrane. The protein resides in the cellular thylakoid membrane. It localises to the cytoplasm. It catalyses the reaction ATP + H2O + cellular proteinSide 1 = ADP + phosphate + cellular proteinSide 2.. Its function is as follows. Part of the Sec protein translocase complex. Interacts with the SecYEG preprotein conducting channel. Has a central role in coupling the hydrolysis of ATP to the transfer of proteins into and across the cell membrane, serving as an ATP-driven molecular motor driving the stepwise translocation of polypeptide chains across the membrane. In terms of biological role, probably participates in protein translocation into and across both the cytoplasmic and thylakoid membranes in cyanobacterial cells. In Prochlorococcus marinus (strain MIT 9215), this protein is Protein translocase subunit SecA.